The chain runs to 132 residues: ATP synthase epsilon chain (132 aa).

The protein belongs to the ATPase epsilon chain family. F-type ATPases have 2 components, CF(1) - the catalytic core - and CF(0) - the membrane proton channel. CF(1) has five subunits: alpha(3), beta(3), gamma(1), delta(1), epsilon(1). CF(0) has three main subunits: a, b and c.

The protein resides in the cell inner membrane. Produces ATP from ADP in the presence of a proton gradient across the membrane. The polypeptide is ATP synthase epsilon chain (Anaeromyxobacter dehalogenans (strain 2CP-1 / ATCC BAA-258)).